The following is a 295-amino-acid chain: Acetylglutamate kinase (295 aa).

Substrate is bound by residues 70-71, R92, and N191; that span reads GG.

The protein belongs to the acetylglutamate kinase family. ArgB subfamily.

Its subcellular location is the cytoplasm. The catalysed reaction is N-acetyl-L-glutamate + ATP = N-acetyl-L-glutamyl 5-phosphate + ADP. Its pathway is amino-acid biosynthesis; L-arginine biosynthesis; N(2)-acetyl-L-ornithine from L-glutamate: step 2/4. Functionally, catalyzes the ATP-dependent phosphorylation of N-acetyl-L-glutamate. In Mycobacterium avium (strain 104), this protein is Acetylglutamate kinase.